Reading from the N-terminus, the 37-residue chain is Large ribosomal subunit protein bL36 (37 aa).

This sequence belongs to the bacterial ribosomal protein bL36 family.

This is Large ribosomal subunit protein bL36 from Moorella thermoacetica (strain ATCC 39073 / JCM 9320).